Consider the following 1478-residue polypeptide: MASTNAESQLQRIIRDLQDAVTELSKEFQEAGEPITDDSTSLHKFSYKLEYLLQFDQKEKATLLGNKKDYWDYFCACLAKVKGANDGIRFVKSISELRTSLGKGRAFIRYSLVHQRLADTLQQCFMNTKVTSDWYYARSPFLQPKLSSDIVGQLYELTEVQFDLASRGFDLDAAWPTFARRTLTTGSSAYLWKPPSRSSSMSSLVSSYLQTQEMVSNFDLNSPLNNEALEGFDEMRLELDQLEVREKQLRERMQQLDRENQELRAAVSQQGEQLQTERERGRTAAEDNVRLTCLVAELQKQWEVTQATQNTVKELQTCLQGLELGAAEKEEDYHTALRRLESMLQPLAQELEATRDSLDKKNQHLASFPGWLAMAQQKADTASDTKGRQEPIPSDAAQEMQELGEKLQALERERTKVEEVNRQQSAQLEQLVKELQLKEDARASLERLVKEMAPLQEELSGKGQEADQLWRRLQELLAHTSSWEEELAELRREKKQQQEEKELLEQEVRSLTRQLQFLETQLAQVSQHVSDLEEQKKQLIQDKDHLSQQVGMLERLAGPPGPELPVAGEKNEALVPVNSSLQEAWGKPEEEQRGLQEAQLDDTKVQEGSQEEELRQANRELEKELQNVVGRNQLLEGKLQALQADYQALQQRESAIQGSLASLEAEQASIRHLGDQMEASLLAVRKAKEAMKAQMAEKEAILQSKEGECQQLREEVEQCQQLAEARHRELRALESQCQQQTQLIEVLTAEKGQQGVGPPTDNEARELAAQLALSQAQLEVHQGEVQRLQAQVVDLQAKMRAALDDQDKVQSQLSMAEAVLREHKTLVQQLKEQNEALNRAHVQELLQCSEREGALQEERADEAQQREEELRALQEELSQAKCSSEEAQLEHAELQEQLHRANTDTAELGIQVCALTVEKERVEEALACAVQELQDAKEAASREREGLERQVAGLQQEKESLQEKLKAAKAAAGSLPGLQAQLAQAEQRAQSLQEAAHQELNTLKFQLSAEIMDYQSRLKNAGEECKSLRGQLEEQGRQLQAAEEAVEKLKATQADMGEKLSCTSNHLAECQAAMLRKDKEGAALREDLERTQKELEKATTKIQEYYNKLCQEVTNRERNDQKMLADLDDLNRTKKYLEERLIELLRDKDALWQKSDALEFQQKLSAEERWLGDTEANHCLDCKREFSWMVRRHHCRICGRIFCYYCCNNYVLSKHGGKKERCCRACFQKLSEGPGSPDSSGSGTSQGEPSPALSPASPGPQATGGQGANTDYRPPDDAVFDIITDEELCQIQESGSSLPETPTETDSLDPNAAEQDTTSTSLTPEDTEDMPVGQDSEICLLKSGELMIKVPLTVDEIASFGEGSRELFVRSSTYSLIPITVAEAGLTISWVFSSDPKSISFSVVFQEAEDTPLDQCKVLIPTTRCNSHKENIQGQLKVRTPGIYMLIFDNTFSRFVSKKVFYHLTVDRPVIYDGSDFL.

At A2 the chain carries N-acetylalanine. A coiled-coil region spans residues 4-33 (TNAESQLQRIIRDLQDAVTELSKEFQEAGE). The RUN domain occupies 36–169 (TDDSTSLHKF…VQFDLASRGF (134 aa)). Phosphoserine is present on S196. Positions 225 to 280 (NNEALEGFDEMRLELDQLEVREKQLRERMQQLDRENQELRAAVSQQGEQLQTERER) form a coiled coil. Phosphoserine is present on S342. Residue T381 is modified to Phosphothreonine. Coiled coils occupy residues 394–555 (SDAA…MLER) and 596–1151 (QEAQ…KDAL). A disordered region spans residues 586 to 613 (GKPEEEQRGLQEAQLDDTKVQEGSQEEE). S878 carries the phosphoserine modification. An FYVE-type zinc finger spans residues 1173–1231 (DTEANHCLDCKREFSWMVRRHHCRICGRIFCYYCCNNYVLSKHGGKKERCCRACFQKLS). Residues C1179, C1182, C1195, C1198, C1203, C1206, C1223, and C1226 each coordinate Zn(2+). The span at 1231–1261 (SEGPGSPDSSGSGTSQGEPSPALSPASPGPQ) shows a compositional bias: low complexity. 2 disordered regions span residues 1231 to 1277 (SEGP…PPDD) and 1294 to 1332 (SGSS…DMPV). Polar residues-rich tracts occupy residues 1294–1305 (SGSSLPETPTET) and 1314–1324 (EQDTTSTSLTP). Residues 1337 to 1466 (EICLLKSGEL…SKKVFYHLTV (130 aa)) form the GOLD domain.

Can form homodimers. Interacts (via C-terminus) with MAP1LC3B. Interacts with RAB7A; the interaction with RAB7A induces FYCO1 recruitment to late endosomal/lysosomal compartments. Interacts with MAP1LC3B. As to expression, expressed in heart and skeletal muscle.

Its subcellular location is the cytoplasmic vesicle. It is found in the autophagosome. The protein resides in the endosome. The protein localises to the lysosome. Its function is as follows. May mediate microtubule plus end-directed vesicle transport. This chain is FYVE and coiled-coil domain-containing protein 1 (FYCO1), found in Homo sapiens (Human).